Here is a 445-residue protein sequence, read N- to C-terminus: DDB1- and CUL4-associated factor 13 (445 aa).

K49 carries the post-translational modification N6-acetyllysine. WD repeat units lie at residues 64 to 104 (GHRD…CIRT), 107 to 146 (AHEG…YGDE), 149 to 191 (PLHT…PICS), 194 to 234 (WGFD…PLKK), 236 to 276 (ILDM…TPVM), 280 to 319 (DHVS…SREV), and 323 to 362 (KRMQ…KLGV). Residues 353–441 (KANASEKLGV…LVSEKKKHVV (89 aa)) are required for nucleolar location.

This sequence belongs to the WD repeat DCAF13/WDSOF1 family. In terms of assembly, part of the small subunit (SSU) processome, composed of more than 70 proteins and the RNA chaperone small nucleolar RNA (snoRNA) U3. Component of the DCX(DCAF13) E3 ubiquitin ligase complex, at least composed of CUL4 (CUL4A or CUL4B), DDB1, DCAF13 and RBX1. Interacts (via WD40 domain) with DDB1. Interacts with ESR1 and LATS1. In terms of tissue distribution, expressed in the endometrium during decidualization. Expression is down-regulated in preeclampsia decidual tissues.

It localises to the nucleus. The protein localises to the nucleolus. It functions in the pathway protein modification; protein ubiquitination. Part of the small subunit (SSU) processome, first precursor of the small eukaryotic ribosomal subunit. During the assembly of the SSU processome in the nucleolus, many ribosome biogenesis factors, an RNA chaperone and ribosomal proteins associate with the nascent pre-rRNA and work in concert to generate RNA folding, modifications, rearrangements and cleavage as well as targeted degradation of pre-ribosomal RNA by the RNA exosome. Participates in the 18S rRNA processing in growing oocytes, being essential for oocyte nonsurrounded nucleolus (NSN) to surrounded nucleolus (SN) transition. Functionally, substrate-recognition component of a DCX (DDB1-CUL4-X-box) E3 ubiquitin-protein ligase complex that plays a key role in embryo preimplantation and is required for normal meiotic cycle progression in oocytes. Acts as a maternal factor that regulates oocyte and zygotic chromatin tightness during maternal to zygotic transition. Also involved in the transformation of the endometrium into the decidua, known as decidualization, providing a solid foundation for implantation of blastocysts. Recognizes the histone methyltransferases SUV39H1 and SUV39H2 and directs them to polyubiquitination and proteasomal degradation, which facilitates the H3K9me3 removal and early zygotic gene expression, essential steps for progressive genome reprogramming and the establishment of pluripotency during preimplantation embryonic development. Supports the spindle assembly and chromosome condensation during oocyte meiotic division by targeting the polyubiquitination and degradation of PTEN, a lipid phosphatase that inhibits PI3K pathway as well as oocyte growth and maturation. Targets PMP22 for polyubiquitination and proteasomal degradation. The protein is DDB1- and CUL4-associated factor 13 of Homo sapiens (Human).